Here is a 676-residue protein sequence, read N- to C-terminus: Serine/threonine-protein kinase Haspin homolog ALK2 (676 aa).

Residues 53–93 (HKGSAEDESQSFFTSSDSPTSKTRPVGKTIENDDYYGKRSS) form a disordered region. Polar residues predominate over residues 62–75 (QSFFTSSDSPTSKT). The KEN box motif lies at 116-118 (KEN). A D box motif is present at residues 150–158 (RTPLRPISN). The tract at residues 228 to 312 (SSRSVNDQDP…HKTSHSSLNK (85 aa)) is disordered. The segment covering 232 to 259 (VNDQDPNFVQPKPTNSLQKKSSISSFHN) has biased composition (polar residues). Residues 383-672 (LCDVKYILHD…TCGDLLSLKG (290 aa)) form the Protein kinase domain. ATP-binding positions include 389–397 (ILHDLREAQ) and Lys430.

It belongs to the protein kinase superfamily. Ser/Thr protein kinase family. Haspin subfamily. In terms of processing, periodically phosphorylated during the cell cycle with a phosphorylation peak during mitosis and hyperphosphorylated after DNA damage.

It catalyses the reaction L-seryl-[protein] + ATP = O-phospho-L-seryl-[protein] + ADP + H(+). It carries out the reaction L-threonyl-[protein] + ATP = O-phospho-L-threonyl-[protein] + ADP + H(+). Functionally, serine/threonine haspin-like protein kinase involved in cell cycle regulation. The protein is Serine/threonine-protein kinase Haspin homolog ALK2 (ALK2) of Saccharomyces cerevisiae (strain ATCC 204508 / S288c) (Baker's yeast).